Reading from the N-terminus, the 893-residue chain is Alanine--tRNA ligase (893 aa).

Zn(2+)-binding residues include H575, H579, C677, and H681.

It belongs to the class-II aminoacyl-tRNA synthetase family. Zn(2+) serves as cofactor.

The protein localises to the cytoplasm. It carries out the reaction tRNA(Ala) + L-alanine + ATP = L-alanyl-tRNA(Ala) + AMP + diphosphate. Its function is as follows. Catalyzes the attachment of alanine to tRNA(Ala) in a two-step reaction: alanine is first activated by ATP to form Ala-AMP and then transferred to the acceptor end of tRNA(Ala). Also edits incorrectly charged Ser-tRNA(Ala) and Gly-tRNA(Ala) via its editing domain. The protein is Alanine--tRNA ligase of Synechococcus sp. (strain CC9311).